The following is a 166-amino-acid chain: Small ribosomal subunit protein uS5 (166 aa).

Residues 11–74 (LQEKLIAVNR…EKARRNMKTV (64 aa)) enclose the S5 DRBM domain.

It belongs to the universal ribosomal protein uS5 family. In terms of assembly, part of the 30S ribosomal subunit. Contacts proteins S4 and S8.

Functionally, with S4 and S12 plays an important role in translational accuracy. Located at the back of the 30S subunit body where it stabilizes the conformation of the head with respect to the body. This is Small ribosomal subunit protein uS5 from Photorhabdus laumondii subsp. laumondii (strain DSM 15139 / CIP 105565 / TT01) (Photorhabdus luminescens subsp. laumondii).